Here is a 122-residue protein sequence, read N- to C-terminus: Large ribosomal subunit protein uL14 (122 aa).

The protein belongs to the universal ribosomal protein uL14 family. As to quaternary structure, part of the 50S ribosomal subunit. Forms a cluster with proteins L3 and L19. In the 70S ribosome, L14 and L19 interact and together make contacts with the 16S rRNA in bridges B5 and B8.

Functionally, binds to 23S rRNA. Forms part of two intersubunit bridges in the 70S ribosome. The chain is Large ribosomal subunit protein uL14 from Roseiflexus castenholzii (strain DSM 13941 / HLO8).